Reading from the N-terminus, the 658-residue chain is Structure-specific endonuclease subunit SLX4 (658 aa).

Disordered regions lie at residues 17-37 (VDSD…IPGD), 74-123 (GATE…KSIT), and 327-383 (QPGV…QVLQ). Composition is skewed to low complexity over residues 75–90 (ATES…PPAK) and 99–108 (KAAGRTSTGT). The segment covering 365 to 374 (FPKSPTSTPE) has biased composition (polar residues).

It belongs to the SLX4 family. Forms a heterodimer with SLX1. Phosphorylated in response to DNA damage.

It localises to the nucleus. Functionally, regulatory subunit of the SLX1-SLX4 structure-specific endonuclease that resolves DNA secondary structures generated during DNA repair and recombination. Has endonuclease activity towards branched DNA substrates, introducing single-strand cuts in duplex DNA close to junctions with ss-DNA. This chain is Structure-specific endonuclease subunit SLX4, found in Lachancea thermotolerans (strain ATCC 56472 / CBS 6340 / NRRL Y-8284) (Yeast).